Here is a 313-residue protein sequence, read N- to C-terminus: MEGKNLTSISEFFLLGFSEQLEEQKALFGSFLFMYLVMVAGNLLIILVIITDTQLHTPMYFFLANLSLADACFVSTTVPKMLANIQIQSQAISYSGCLLQLYFFMLFVMLEAFLLAVMAYDHYVAICHPLHYILIMSPGLCVFLVSASWIMNALYSLLHTLLMNSLSFCANHEIPHFFCDIDPLLSLSCADPFTNELVIFITGGLTGLICVLCLIISYTNVFSTILKIPSAQGKRKAFSTCSSHLSVVSLFXGTSFCVYFSPPSTRXAQKDTVASVMYTVVTPMLNPFIYSLRNQEIKSSLRKLIWVRKIHSP.

Over 1–25 the chain is Extracellular; sequence MEGKNLTSISEFFLLGFSEQLEEQK. N-linked (GlcNAc...) asparagine glycosylation is present at asparagine 5. Residues 26 to 49 traverse the membrane as a helical segment; that stretch reads ALFGSFLFMYLVMVAGNLLIILVI. At 50-57 the chain is on the cytoplasmic side; sequence ITDTQLHT. A helical membrane pass occupies residues 58 to 79; the sequence is PMYFFLANLSLADACFVSTTVP. The Extracellular segment spans residues 80–100; the sequence is KMLANIQIQSQAISYSGCLLQ. A disulfide bridge connects residues cysteine 97 and cysteine 189. The chain crosses the membrane as a helical span at residues 101-120; the sequence is LYFFMLFVMLEAFLLAVMAY. The Cytoplasmic segment spans residues 121 to 140; sequence DHYVAICHPLHYILIMSPGL. Residues 141–158 form a helical membrane-spanning segment; that stretch reads CVFLVSASWIMNALYSLL. Over 159–196 the chain is Extracellular; it reads HTLLMNSLSFCANHEIPHFFCDIDPLLSLSCADPFTNE. A helical transmembrane segment spans residues 197-219; it reads LVIFITGGLTGLICVLCLIISYT. The Cytoplasmic segment spans residues 220–236; the sequence is NVFSTILKIPSAQGKRK. A helical transmembrane segment spans residues 237–259; the sequence is AFSTCSSHLSVVSLFXGTSFCVY. Residues 260–272 lie on the Extracellular side of the membrane; the sequence is FSPPSTRXAQKDT. Residues 273–292 traverse the membrane as a helical segment; it reads VASVMYTVVTPMLNPFIYSL. Topologically, residues 293–313 are cytoplasmic; the sequence is RNQEIKSSLRKLIWVRKIHSP.

Belongs to the G-protein coupled receptor 1 family.

The protein localises to the cell membrane. Functionally, odorant receptor. The chain is Olfactory receptor 1G1 (OR1G1) from Pan troglodytes (Chimpanzee).